The following is a 44-amino-acid chain: Large ribosomal subunit protein bL34 (44 aa).

This sequence belongs to the bacterial ribosomal protein bL34 family.

This chain is Large ribosomal subunit protein bL34, found in Neorickettsia sennetsu (strain ATCC VR-367 / Miyayama) (Ehrlichia sennetsu).